A 278-amino-acid chain; its full sequence is Rhamnulose-1-phosphate aldolase (278 aa).

The active site involves glutamate 116. Zn(2+) is bound by residues histidine 139, histidine 141, and histidine 210.

This sequence belongs to the aldolase class II family. RhaD subfamily. Zn(2+) is required as a cofactor.

It localises to the cytoplasm. The enzyme catalyses L-rhamnulose 1-phosphate = (S)-lactaldehyde + dihydroxyacetone phosphate. Its pathway is carbohydrate degradation; L-rhamnose degradation; glycerone phosphate from L-rhamnose: step 3/3. Its function is as follows. Catalyzes the reversible cleavage of L-rhamnulose-1-phosphate to dihydroxyacetone phosphate (DHAP) and L-lactaldehyde. The protein is Rhamnulose-1-phosphate aldolase of Listeria welshimeri serovar 6b (strain ATCC 35897 / DSM 20650 / CCUG 15529 / CIP 8149 / NCTC 11857 / SLCC 5334 / V8).